The sequence spans 291 residues: NAD kinase (291 aa).

Asp73 (proton acceptor) is an active-site residue. NAD(+) is bound by residues 73 to 74 (DG), 147 to 148 (ND), Arg175, Asp177, 188 to 193 (TAYALS), Ala212, and Gln246.

The protein belongs to the NAD kinase family. The cofactor is a divalent metal cation.

It is found in the cytoplasm. The enzyme catalyses NAD(+) + ATP = ADP + NADP(+) + H(+). Involved in the regulation of the intracellular balance of NAD and NADP, and is a key enzyme in the biosynthesis of NADP. Catalyzes specifically the phosphorylation on 2'-hydroxyl of the adenosine moiety of NAD to yield NADP. This chain is NAD kinase, found in Polaromonas naphthalenivorans (strain CJ2).